The sequence spans 317 residues: Small ribosomal subunit protein RACK1 (317 aa).

WD repeat units lie at residues Gly-15 to Tyr-55, Gly-64 to Arg-103, Gly-106 to Thr-146, His-148 to Asp-188, Gly-191 to Thr-230, Glu-232 to Lys-272, and Ala-281 to Ala-317.

Belongs to the WD repeat G protein beta family. Ribosomal protein RACK1 subfamily. As to quaternary structure, component of the small ribosomal subunit. Mature ribosomes consist of a small (40S) and a large (60S) subunit. The 40S subunit contains about 32 different proteins and 1 molecule of RNA (18S). The 60S subunit contains 45 different proteins and 3 molecules of RNA (25S, 5.8S and 5S).

Its subcellular location is the cytoplasm. In terms of biological role, component of the ribosome, a large ribonucleoprotein complex responsible for the synthesis of proteins in the cell. The small ribosomal subunit (SSU) binds messenger RNAs (mRNAs) and translates the encoded message by selecting cognate aminoacyl-transfer RNA (tRNA) molecules. The large subunit (LSU) contains the ribosomal catalytic site termed the peptidyl transferase center (PTC), which catalyzes the formation of peptide bonds, thereby polymerizing the amino acids delivered by tRNAs into a polypeptide chain. The nascent polypeptides leave the ribosome through a tunnel in the LSU and interact with protein factors that function in enzymatic processing, targeting, and the membrane insertion of nascent chains at the exit of the ribosomal tunnel. Located at the head of the 40S ribosomal subunit in the vicinity of the mRNA exit channel, it serves as a scaffold protein that can recruit other proteins to the ribosome. Involved in the negative regulation of translation of a specific subset of proteins. Plays a role in morphogenesis and pathogenesis. The chain is Small ribosomal subunit protein RACK1 from Candida albicans (strain SC5314 / ATCC MYA-2876) (Yeast).